The sequence spans 237 residues: MRPSGRTASQIRPVTITRQYTCHAEGSVLVEFGNTKVLCNATVEEGVPRFMKGQGKGWVTAEYSMLPRATHTRSGREAARGKQGGRTLEIQRLIARSLRAALDLKLLGENTITLDCDVIQADGGTRTASITGACVALVDALTYMRSKGIIKTNPLKHMIAALSVGIYEGTPIADLEYTEDSEAETDMNIVMTETGKLIEVQGTAEGEPFSFEELDELLKIGKHGLRELFDIQKAALA.

Phosphate contacts are provided by residues Arg-86 and 124-126; that span reads GTR.

It belongs to the RNase PH family. As to quaternary structure, homohexameric ring arranged as a trimer of dimers.

The enzyme catalyses tRNA(n+1) + phosphate = tRNA(n) + a ribonucleoside 5'-diphosphate. Its function is as follows. Phosphorolytic 3'-5' exoribonuclease that plays an important role in tRNA 3'-end maturation. Removes nucleotide residues following the 3'-CCA terminus of tRNAs; can also add nucleotides to the ends of RNA molecules by using nucleoside diphosphates as substrates, but this may not be physiologically important. Probably plays a role in initiation of 16S rRNA degradation (leading to ribosome degradation) during starvation. This Alteromonas mediterranea (strain DSM 17117 / CIP 110805 / LMG 28347 / Deep ecotype) protein is Ribonuclease PH.